The sequence spans 280 residues: 3,2-trans-enoyl-CoA isomerase (280 aa).

Residues 68 to 72 (SGADF) and Leu126 contribute to the substrate site. Glu158 (proton donor/acceptor) is an active-site residue. The Microbody targeting signal motif lies at 278–280 (HRL).

This sequence belongs to the enoyl-CoA hydratase/isomerase family. Homohexamer, dimer of trimers. Interacts with DCI1.

It is found in the peroxisome. The catalysed reaction is a (3Z)-enoyl-CoA = a 4-saturated (2E)-enoyl-CoA. It carries out the reaction a (3E)-enoyl-CoA = a 4-saturated (2E)-enoyl-CoA. Its pathway is lipid metabolism; fatty acid beta-oxidation. In terms of biological role, essential for the beta oxidation of unsaturated fatty acids. This Saccharomyces cerevisiae (strain ATCC 204508 / S288c) (Baker's yeast) protein is 3,2-trans-enoyl-CoA isomerase (ECI1).